A 717-amino-acid polypeptide reads, in one-letter code: Ribosomal RNA large subunit methyltransferase K/L (717 aa).

Residues 44-155 form the THUMP domain; that stretch reads DAYKVCIYSY…KQFVNVFLCL (112 aa).

This sequence belongs to the methyltransferase superfamily. RlmKL family.

The protein localises to the cytoplasm. The enzyme catalyses guanosine(2445) in 23S rRNA + S-adenosyl-L-methionine = N(2)-methylguanosine(2445) in 23S rRNA + S-adenosyl-L-homocysteine + H(+). It carries out the reaction guanosine(2069) in 23S rRNA + S-adenosyl-L-methionine = N(2)-methylguanosine(2069) in 23S rRNA + S-adenosyl-L-homocysteine + H(+). Functionally, specifically methylates the guanine in position 2445 (m2G2445) and the guanine in position 2069 (m7G2069) of 23S rRNA. The polypeptide is Ribosomal RNA large subunit methyltransferase K/L (Francisella tularensis subsp. tularensis (strain WY96-3418)).